The following is a 711-amino-acid chain: DNA ligase (711 aa).

Positions 1-29 (MSEDAIGQQVPAAQEAAAGAEPNSAARER) are disordered. A compositionally biased stretch (low complexity) spans 12–25 (AAQEAAAGAEPNSA). NAD(+) is bound by residues 54–58 (DAAFD), 103–104 (SL), and E133. K135 functions as the N6-AMP-lysine intermediate in the catalytic mechanism. Residues R156, E197, K313, and K337 each contribute to the NAD(+) site. Positions 431, 434, 450, and 456 each coordinate Zn(2+). The region spanning 620-709 (QGPRPLEGVT…PEAARAVARV (90 aa)) is the BRCT domain.

It belongs to the NAD-dependent DNA ligase family. LigA subfamily. Requires Mg(2+) as cofactor. Mn(2+) serves as cofactor.

The catalysed reaction is NAD(+) + (deoxyribonucleotide)n-3'-hydroxyl + 5'-phospho-(deoxyribonucleotide)m = (deoxyribonucleotide)n+m + AMP + beta-nicotinamide D-nucleotide.. DNA ligase that catalyzes the formation of phosphodiester linkages between 5'-phosphoryl and 3'-hydroxyl groups in double-stranded DNA using NAD as a coenzyme and as the energy source for the reaction. It is essential for DNA replication and repair of damaged DNA. This Salinispora tropica (strain ATCC BAA-916 / DSM 44818 / JCM 13857 / NBRC 105044 / CNB-440) protein is DNA ligase.